The sequence spans 698 residues: uncharacterized protein (698 aa).

A signal peptide spans 1 to 17; sequence MKKRHLLSLLALGISTA. Residue cysteine 18 is the site of N-palmitoyl cysteine attachment. Cysteine 18 carries the S-diacylglycerol cysteine lipid modification.

The protein to E.coli YmcA.

The protein resides in the cell membrane. This is an uncharacterized protein from Escherichia coli (strain K12).